The sequence spans 101 residues: Urease subunit beta (101 aa).

It belongs to the urease beta subunit family. As to quaternary structure, heterotrimer of UreA (gamma), UreB (beta) and UreC (alpha) subunits. Three heterotrimers associate to form the active enzyme.

It localises to the cytoplasm. It catalyses the reaction urea + 2 H2O + H(+) = hydrogencarbonate + 2 NH4(+). The protein operates within nitrogen metabolism; urea degradation; CO(2) and NH(3) from urea (urease route): step 1/1. The polypeptide is Urease subunit beta (Cereibacter sphaeroides (strain ATCC 17029 / ATH 2.4.9) (Rhodobacter sphaeroides)).